A 96-amino-acid polypeptide reads, in one-letter code: Protein Vpr (96 aa).

Residues 1–42 are homooligomerization; it reads MEQAPEDQGPQREPYNEWTLELLEELKREAVRHFPRPWLHGL. Phosphoserine; by host is present on residues Ser-79, Ser-94, and Ser-96.

This sequence belongs to the HIV-1 VPR protein family. As to quaternary structure, homooligomer, may form homodimer. Interacts with p6-gag region of the Pr55 Gag precursor protein through a (Leu-X-X)4 motif near the C-terminus of the P6gag protein. Interacts with host UNG. May interact with host RAD23A/HHR23A. Interacts with host VPRBP/DCAF1, leading to hijack the CUL4A-RBX1-DDB1-DCAF1/VPRBP complex, mediating ubiquitination of host proteins such as TERT and ZGPAT and arrest of the cell cycle in G2 phase. In terms of processing, phosphorylated on several residues by host. These phosphorylations regulate VPR activity for the nuclear import of the HIV-1 pre-integration complex.

The protein localises to the virion. The protein resides in the host nucleus. It is found in the host extracellular space. During virus replication, may deplete host UNG protein, and incude G2-M cell cycle arrest. Acts by targeting specific host proteins for degradation by the 26S proteasome, through association with the cellular CUL4A-DDB1 E3 ligase complex by direct interaction with host VPRPB/DCAF-1. Cell cycle arrest reportedly occurs within hours of infection and is not blocked by antiviral agents, suggesting that it is initiated by the VPR carried into the virion. Additionally, VPR induces apoptosis in a cell cycle dependent manner suggesting that these two effects are mechanistically linked. Detected in the serum and cerebrospinal fluid of AIDS patient, VPR may also induce cell death to bystander cells. Its function is as follows. During virus entry, plays a role in the transport of the viral pre-integration (PIC) complex to the host nucleus. This function is crucial for viral infection of non-dividing macrophages. May act directly at the nuclear pore complex, by binding nucleoporins phenylalanine-glycine (FG)-repeat regions. This Human immunodeficiency virus type 1 group M subtype C (isolate 92BR025) (HIV-1) protein is Protein Vpr.